The primary structure comprises 63 residues: Large ribosomal subunit protein bL28 (63 aa).

It belongs to the bacterial ribosomal protein bL28 family.

The polypeptide is Large ribosomal subunit protein bL28 (Syntrophotalea carbinolica (strain DSM 2380 / NBRC 103641 / GraBd1) (Pelobacter carbinolicus)).